A 226-amino-acid chain; its full sequence is Thioredoxin domain-containing protein 9 (226 aa).

Positions 74-180 (REIPSERDFF…TTETLEWRLG (107 aa)) constitute a Thioredoxin domain. Phosphoserine is present on residues Ser188, Ser221, and Ser223.

As to quaternary structure, forms ternary complexes with the chaperonin TCP1 complex, spanning the cylindrical chaperonin cavity and contacting at least 2 subunits.

The protein resides in the cytoplasm. The protein localises to the nucleus. It localises to the cytoskeleton. It is found in the microtubule organizing center. Its subcellular location is the centrosome. The protein resides in the midbody. In terms of biological role, significantly diminishes the chaperonin TCP1 complex ATPase activity, thus negatively impacts protein folding, including that of actin or tubulin. The polypeptide is Thioredoxin domain-containing protein 9 (TXNDC9) (Homo sapiens (Human)).